Here is a 156-residue protein sequence, read N- to C-terminus: MADIKGKYSPRLANKRGAARLAAVQALYQMDIVGSGVMETAAEYEAYHLEKNIDGNQYLDADFQWFLAIITGVVKDQKQLDPMLHQQLSAEWSLSRLDSILRAILRAGLWELINRQDVPIAVVMNEYVDIAKAFFEGDEPKLVNAVLDSMAKKIRL.

This sequence belongs to the NusB family.

In terms of biological role, involved in transcription antitermination. Required for transcription of ribosomal RNA (rRNA) genes. Binds specifically to the boxA antiterminator sequence of the ribosomal RNA (rrn) operons. The polypeptide is Transcription antitermination protein NusB (Bartonella quintana (strain Toulouse) (Rochalimaea quintana)).